The following is a 188-amino-acid chain: Photosystem I assembly protein Ycf4 (188 aa).

2 helical membrane passes run 26–46 (IWWG…GLSS) and 70–90 (LLFY…TIIL).

This sequence belongs to the Ycf4 family.

It is found in the cellular thylakoid membrane. Functionally, seems to be required for the assembly of the photosystem I complex. In Rippkaea orientalis (strain PCC 8801 / RF-1) (Cyanothece sp. (strain PCC 8801)), this protein is Photosystem I assembly protein Ycf4.